Consider the following 576-residue polypeptide: Nuclear receptor subfamily 1 group D member 2 (576 aa).

Residues 1–60 are required for phosphorylation by CSNK1E and cytoplasmic localization; sequence MELNAGGVIAYISSSSSASSPASCHSEGSENSFQSSSSSVPSSPNSSNCDANGNPKNADI. The segment at 1-99 is modulating; sequence MELNAGGVIA…HSGMTKFSGM (99 aa). Low complexity predominate over residues 13–47; that stretch reads SSSSSASSPASCHSEGSENSFQSSSSSVPSSPNSS. The disordered stretch occupies residues 13-90; sequence SSSSSASSPA…TSAPGMTKSH (78 aa). Phosphoserine; by GSK3-beta is present on serine 46. A DNA-binding region (nuclear receptor) is located at residues 100–176; that stretch reads VLLCKVCGDV…VGMSRDAVRF (77 aa). 2 consecutive NR C4-type zinc fingers follow at residues 103-123 and 140-164; these read CKVCGDVASGFHYGVHACEGC and CLKNENCSIMRMNRNRCQQCRFKKC. Lysine 162 and lysine 163 each carry N6-acetyllysine; by KAT5. Disordered stretches follow at residues 215-246 and 263-282; these read QHDQSALPAQEQLRPKSQLEQENIKNTPSDFA and LYNQEHRENSSESMPPQRGE. Basic and acidic residues-rich tracts occupy residues 227–237 and 263–272; these read LRPKSQLEQEN and LYNQEHRENS. 2 disulfides stabilise this stretch: cysteine 334–cysteine 340 and cysteine 371–cysteine 381. The region spanning 366–576 is the NR LBD domain; sequence RNSYLCNTGG…EELLAFKVHP (211 aa). The heme site is built by cysteine 381 and histidine 565. Residues 394–576 are interaction with ZNHIT1; it reads SGHEIWEEFS…EELLAFKVHP (183 aa).

The protein belongs to the nuclear hormone receptor family. NR1 subfamily. As to quaternary structure, binds DNA as a monomer or a homodimer. Interacts with NCOA5 coactivator, leading to a strong increase of transcription of target genes. Interacts (via N-terminus) with KAT5. Interacts (via C-terminus) with HDAC1. Interacts with ZNHIT1. Interacts with SIAH2. In terms of processing, deacetylated by HDAC1. Acetylation and deacetylation regulate its transcriptional regulatory activity. Post-translationally, under more reducing intracellular redox conditions, Cys-381 is in its heme-bound state, which is optimal for recruitment of the NCOR1/HDAC3 corepressor complex and repression of target genes. When subjected to oxidative stress conditions, Cys-381 undergoes oxidation to form a disulfide bridge with Cys-371, also triggering a ligand switch that results in release of bound heme and derepression of target genes. Ubiquitinated by SIAH2; leading to its proteasomal degradation. In terms of processing, phosphorylated by CSNK1E; phosphorylation enhances its cytoplasmic localization. Ubiquitous. Expressed abundantly in skeletal muscle and brown adipose tissue. Expressed during skeletal muscle myogenesis.

Its subcellular location is the nucleus. The protein resides in the cytoplasm. With respect to regulation, the heme-bound form can bind gaseous signaling molecules such as CO and nitric oxide (NO) and NO can reverse its transcriptional repressor activity. Its function is as follows. Transcriptional repressor which coordinates circadian rhythm and metabolic pathways in a heme-dependent manner. Integral component of the complex transcription machinery that governs circadian rhythmicity and forms a critical negative limb of the circadian clock by directly repressing the expression of core clock components BMAL1 and CLOCK. Also regulates genes involved in metabolic functions, including lipid metabolism and the inflammatory response. Acts as a receptor for heme which stimulates its interaction with the NCOR1/HDAC3 corepressor complex, enhancing transcriptional repression. Recognizes two classes of DNA response elements within the promoter of its target genes and can bind to DNA as either monomers or homodimers, depending on the nature of the response element. Binds as a monomer to a response element composed of the consensus half-site motif 5'-[A/G]GGTCA-3' preceded by an A/T-rich 5' sequence (RevRE), or as a homodimer to a direct repeat of the core motif spaced by two nuclegotides (RevDR-2). Acts as a potent competitive repressor of ROR alpha (RORA) function and also negatively regulates the expression of NR1D1. Regulates lipid and energy homeostasis in the skeletal muscle via repression of genes involved in lipid metabolism and myogenesis including: CD36, FABP3, FABP4, UCP3, SCD1 and MSTN. Regulates hepatic lipid metabolism via the repression of APOC3. Represses gene expression at a distance in macrophages by inhibiting the transcription of enhancer-derived RNAs (eRNAs). In addition to its activity as a repressor, can also act as a transcriptional activator. Acts as a transcriptional activator of the sterol regulatory element-binding protein 1 (SREBF1) and the inflammatory mediator interleukin-6 (IL6) in the skeletal muscle. Plays a role in the regulation of circadian sleep/wake cycle; essential for maintaining wakefulness during the dark phase or active period. Key regulator of skeletal muscle mitochondrial function; negatively regulates the skeletal muscle expression of core clock genes and genes involved in mitochondrial biogenesis, fatty acid beta-oxidation and lipid metabolism. May play a role in the circadian control of neutrophilic inflammation in the lung. This chain is Nuclear receptor subfamily 1 group D member 2, found in Mus musculus (Mouse).